The following is a 328-amino-acid chain: Putative GDP-L-fucose synthase 2 (328 aa).

An N-acetylalanine modification is found at Ala-2. 26–32 provides a ligand contact to NADP(+); the sequence is GHRGLVG. Residue Tyr-152 is the Proton donor/acceptor of the active site. Residues Lys-156, 179–182, and His-195 contribute to the NADP(+) site; that span reads PTNL. Arg-203, Trp-218, Arg-225, and Asp-285 together coordinate substrate.

It belongs to the NAD(P)-dependent epimerase/dehydratase family. Fucose synthase subfamily. As to quaternary structure, homodimer.

The enzyme catalyses GDP-beta-L-fucose + NADP(+) = GDP-4-dehydro-alpha-D-rhamnose + NADPH + H(+). The protein operates within nucleotide-sugar biosynthesis; GDP-L-fucose biosynthesis via de novo pathway; GDP-L-fucose from GDP-alpha-D-mannose: step 2/2. In terms of biological role, catalyzes the two-step NADP-dependent conversion of GDP-4-dehydro-6-deoxy-D-mannose to GDP-fucose, involving an epimerase and a reductase reaction. This is Putative GDP-L-fucose synthase 2 (GER2) from Arabidopsis thaliana (Mouse-ear cress).